The primary structure comprises 258 residues: Distal membrane-arm assembly complex protein 2 (258 aa).

Belongs to the ATP synthase subunit s family. Interacts with incompletely assembled mitochondrial NADH:ubiquinone oxidoreductase complex (complex I).

Its subcellular location is the mitochondrion. Required for the assembly of the mitochondrial NADH:ubiquinone oxidoreductase complex (complex I). Involved in the assembly of the distal region of complex I. This chain is Distal membrane-arm assembly complex protein 2 (Dmac2), found in Mus musculus (Mouse).